A 394-amino-acid chain; its full sequence is Acetate kinase (394 aa).

Residue Asn-7 coordinates Mg(2+). Position 14 (Lys-14) interacts with ATP. Substrate is bound at residue Arg-90. Asp-147 serves as the catalytic Proton donor/acceptor. Residues 204 to 208 (HLGNG), 278 to 280 (DLR), and 326 to 330 (GIGEN) contribute to the ATP site. Position 380 (Glu-380) interacts with Mg(2+).

The protein belongs to the acetokinase family. As to quaternary structure, homodimer. Mg(2+) serves as cofactor. Mn(2+) is required as a cofactor.

The protein resides in the cytoplasm. The catalysed reaction is acetate + ATP = acetyl phosphate + ADP. Its pathway is metabolic intermediate biosynthesis; acetyl-CoA biosynthesis; acetyl-CoA from acetate: step 1/2. Its function is as follows. Catalyzes the formation of acetyl phosphate from acetate and ATP. Can also catalyze the reverse reaction. The chain is Acetate kinase from Flavobacterium johnsoniae (strain ATCC 17061 / DSM 2064 / JCM 8514 / BCRC 14874 / CCUG 350202 / NBRC 14942 / NCIMB 11054 / UW101) (Cytophaga johnsonae).